Here is an 89-residue protein sequence, read N- to C-terminus: Small ribosomal subunit protein uS15c (89 aa).

It belongs to the universal ribosomal protein uS15 family. Part of the 30S ribosomal subunit.

The protein resides in the plastid. It localises to the chloroplast. The protein is Small ribosomal subunit protein uS15c (rps15) of Chloranthus spicatus (Chulantree).